We begin with the raw amino-acid sequence, 187 residues long: Interferon beta (187 aa).

An N-terminal signal peptide occupies residues 1 to 21; it reads MTNKCLLQIALLLCFSTTALS. Tyrosine 24 carries the post-translational modification Phosphotyrosine. Cysteines 52 and 162 form a disulfide. A glycan (N-linked (GlcNAc...) asparagine) is linked at asparagine 101.

It belongs to the alpha/beta interferon family. As to quaternary structure, monomer.

It localises to the secreted. Its function is as follows. Type I interferon cytokine that plays a key role in the innate immune response to infection, developing tumors and other inflammatory stimuli. Signals via binding to high-affinity (IFNAR2) and low-affinity (IFNAR1) heterodimeric receptor, activating the canonical Jak-STAT signaling pathway resulting in transcriptional activation or repression of interferon-regulated genes that encode the effectors of the interferon response, such as antiviral proteins, regulators of cell proliferation and differentiation, and immunoregulatory proteins. Signals mostly via binding to a IFNAR1-IFNAR2 heterodimeric receptor, but can also function with IFNAR1 alone and independently of Jak-STAT pathways. Elicits a wide variety of responses, including antiviral and antibacterial activities, and can regulate the development of B-cells, myelopoiesis and lipopolysaccharide (LPS)-inducible production of tumor necrosis factor. Plays a role in neuronal homeostasis by regulating dopamine turnover and protecting dopaminergic neurons: acts by promoting neuronal autophagy and alpha-synuclein clearance, thereby preventing dopaminergic neuron loss. IFNB1 is more potent than interferon-alpha (IFN-alpha) in inducing the apoptotic and antiproliferative pathways required for control of tumor cell growth. This Homo sapiens (Human) protein is Interferon beta.